The following is a 318-amino-acid chain: Methionyl-tRNA formyltransferase (318 aa).

Residue 112–115 participates in (6S)-5,6,7,8-tetrahydrofolate binding; it reads SILP.

It belongs to the Fmt family.

It catalyses the reaction L-methionyl-tRNA(fMet) + (6R)-10-formyltetrahydrofolate = N-formyl-L-methionyl-tRNA(fMet) + (6S)-5,6,7,8-tetrahydrofolate + H(+). In terms of biological role, attaches a formyl group to the free amino group of methionyl-tRNA(fMet). The formyl group appears to play a dual role in the initiator identity of N-formylmethionyl-tRNA by promoting its recognition by IF2 and preventing the misappropriation of this tRNA by the elongation apparatus. The polypeptide is Methionyl-tRNA formyltransferase (Shewanella sp. (strain MR-7)).